The sequence spans 147 residues: 3-hydroxyacyl-[acyl-carrier-protein] dehydratase FabZ (147 aa).

His-49 is an active-site residue.

Belongs to the thioester dehydratase family. FabZ subfamily.

The protein resides in the cytoplasm. It carries out the reaction a (3R)-hydroxyacyl-[ACP] = a (2E)-enoyl-[ACP] + H2O. In terms of biological role, involved in unsaturated fatty acids biosynthesis. Catalyzes the dehydration of short chain beta-hydroxyacyl-ACPs and long chain saturated and unsaturated beta-hydroxyacyl-ACPs. This is 3-hydroxyacyl-[acyl-carrier-protein] dehydratase FabZ from Syntrophotalea carbinolica (strain DSM 2380 / NBRC 103641 / GraBd1) (Pelobacter carbinolicus).